We begin with the raw amino-acid sequence, 482 residues long: tRNA sulfurtransferase (482 aa).

In terms of domain architecture, THUMP spans 61–165 (LAIRDALTRI…DDRLLLIKGR (105 aa)). ATP-binding positions include 183–184 (LI), Lys-265, Gly-287, and Gln-296. An intrachain disulfide couples Cys-344 to Cys-456. Residues 404-482 (FGPNDVILDI…GFENVKAYRP (79 aa)) form the Rhodanese domain. The Cysteine persulfide intermediate role is filled by Cys-456.

This sequence belongs to the ThiI family.

The protein resides in the cytoplasm. It catalyses the reaction [ThiI sulfur-carrier protein]-S-sulfanyl-L-cysteine + a uridine in tRNA + 2 reduced [2Fe-2S]-[ferredoxin] + ATP + H(+) = [ThiI sulfur-carrier protein]-L-cysteine + a 4-thiouridine in tRNA + 2 oxidized [2Fe-2S]-[ferredoxin] + AMP + diphosphate. The enzyme catalyses [ThiS sulfur-carrier protein]-C-terminal Gly-Gly-AMP + S-sulfanyl-L-cysteinyl-[cysteine desulfurase] + AH2 = [ThiS sulfur-carrier protein]-C-terminal-Gly-aminoethanethioate + L-cysteinyl-[cysteine desulfurase] + A + AMP + 2 H(+). It participates in cofactor biosynthesis; thiamine diphosphate biosynthesis. Functionally, catalyzes the ATP-dependent transfer of a sulfur to tRNA to produce 4-thiouridine in position 8 of tRNAs, which functions as a near-UV photosensor. Also catalyzes the transfer of sulfur to the sulfur carrier protein ThiS, forming ThiS-thiocarboxylate. This is a step in the synthesis of thiazole, in the thiamine biosynthesis pathway. The sulfur is donated as persulfide by IscS. The protein is tRNA sulfurtransferase of Salmonella gallinarum (strain 287/91 / NCTC 13346).